Here is a 313-residue protein sequence, read N- to C-terminus: Serine/threonine-protein phosphatase PP2A-3 catalytic subunit (313 aa).

Mn(2+)-binding residues include aspartate 61, histidine 63, aspartate 89, and asparagine 121. Catalysis depends on histidine 122, which acts as the Proton donor. The Mn(2+) site is built by histidine 171 and histidine 245. At leucine 313 the chain carries Leucine methyl ester.

The protein belongs to the PPP phosphatase family. PP-2A subfamily. PP2A consists of a common heterodimeric core enzyme, composed of a 36 kDa catalytic subunit (subunit C) and a 65 kDa constant regulatory subunit (subunit A), that associates with a variety of regulatory subunits such as subunits B (the R2/B/PR55/B55, R3/B''/PR72/PR130/PR59 and R5/B'/B56 families). Interacts with ACR4. Interacts with TAP46. Interacts with SIC/RON3. The cofactor is Mn(2+). In terms of processing, reversibly methyl esterified on Leu-313 by leucine carboxyl methyltransferase 1 (LCMT1) and pectin methylesterase 1 (PME1). Carboxyl methylation influences the affinity of the catalytic subunit for the different regulatory subunits, thereby modulating the PP2A holoenzyme's substrate specificity, enzyme activity and cellular localization. Phosphorylation of either threonine (by autophosphorylation-activated protein kinase) or tyrosine results in inactivation of the phosphatase. Auto-dephosphorylation has been suggested as a mechanism for reactivation.

It localises to the cytoplasm. It catalyses the reaction O-phospho-L-seryl-[protein] + H2O = L-seryl-[protein] + phosphate. The enzyme catalyses O-phospho-L-threonyl-[protein] + H2O = L-threonyl-[protein] + phosphate. Functionally, functions redundantly with PP2A4, and is involved in establishing auxin gradients, apical-basal axis of polarity and root and shoot apical meristem during embryogenesis. May dephosphorylate PIN1 and regulate its subcellular distribution for polar auxin transport. Involved in the regulation of formative cell division in roots by dephosphorylating ACR4 protein kinase. This chain is Serine/threonine-protein phosphatase PP2A-3 catalytic subunit, found in Arabidopsis thaliana (Mouse-ear cress).